The following is a 253-amino-acid chain: Oxidoreductase AOL_s00215g277 (253 aa).

The chain crosses the membrane as a helical span at residues 181–203 (FFGYWLTVILGYYIGSLLGYQPF).

It belongs to the oxidoreductase OpS7 family.

The protein resides in the membrane. The protein operates within secondary metabolite biosynthesis; terpenoid biosynthesis. In terms of biological role, oxidoreductase; part of the gene cluster that mediates the biosynthesis of sesquiterpenyl epoxy-cyclohexenoids (SECs) such as anthrobotrisins and arthrosporols, metabolites that possess a novel hybrid carbon skeleton consisting of a polyketide-derived epoxycyclohexenol combined with a terpenoid-derived monocyclic sesquiterpenol substructure (PKS-PTS hybrid). The SEC pathway plays an important role for fungal soil colonization via decreasing fungal nematode-capturing ability. Within the pathway, the oxidoreductase AOL_s00215g277 seems to play a role in the farnesylation step of toluquinol to produce farnesyl hydroquinone, the hybrid precursor for biosynthesis of SECs. The pathway begins with the biosynthesis of 6-methylsalicylic acid (6-MSA), the first precursor of the polyketide-derived epoxycyclohexenol in arthrosporols, by the polyketide synthase (PKS) AOL_s00215g283 via condensation of 1 acetate and 3 malonate units. The 6-methylsalicylic acid decarboxylase AOL_s00215g281 then catalyzes the decarboxylation of 6-methylsalicylic acid to yield m-cresol. The cytochrome P450 monooxygenase AOL_s00215g282 further oxidizes m-cresol to yield toluquinol. With the assistance of the oxidoreductase AOL_s00215g277, the polyprenyl transferase AOL_s00215g276 catalyzes the farnesylation of toluquinol to produce farnesyl hydroquinone, the hybrid precursor for biosynthesis of SECs. Farnesyl hydroquinone undergoes epoxidation and then subsequent dehydrogenation to form farnesyl epoxy-quinone, the first and simplest SEC. The cytochrome P450 monooxygenase AOL_s00215g278 and the FAD-dependent monooxygenase AOL_s00215g279 might be involved in the oxygenation of the phenol moiety, most likely in the epoxy formation. The cytochrome P450 monooxygenases AOL_s00215g274 and AOL_s00215g280 are involved in specific regional ketone reductions at respectively C-4 and C-1 of farnesyl epoxy-quinone PubMed:33823587. The protein is Oxidoreductase AOL_s00215g277 of Arthrobotrys oligospora (strain ATCC 24927 / CBS 115.81 / DSM 1491) (Nematode-trapping fungus).